The primary structure comprises 295 residues: Bifunctional protein FolD (295 aa).

Residues 169–171, T196, and V237 contribute to the NADP(+) site; that span reads GRG.

This sequence belongs to the tetrahydrofolate dehydrogenase/cyclohydrolase family. Homodimer.

The enzyme catalyses (6R)-5,10-methylene-5,6,7,8-tetrahydrofolate + NADP(+) = (6R)-5,10-methenyltetrahydrofolate + NADPH. The catalysed reaction is (6R)-5,10-methenyltetrahydrofolate + H2O = (6R)-10-formyltetrahydrofolate + H(+). It participates in one-carbon metabolism; tetrahydrofolate interconversion. In terms of biological role, catalyzes the oxidation of 5,10-methylenetetrahydrofolate to 5,10-methenyltetrahydrofolate and then the hydrolysis of 5,10-methenyltetrahydrofolate to 10-formyltetrahydrofolate. The sequence is that of Bifunctional protein FolD from Kineococcus radiotolerans (strain ATCC BAA-149 / DSM 14245 / SRS30216).